The chain runs to 153 residues: Transthyretin (153 aa).

A signal peptide spans methionine 1–glycine 24. Cysteine 33 carries the post-translational modification Sulfocysteine. L-thyroxine-binding residues include lysine 38, glutamate 77, and serine 140.

Belongs to the transthyretin family. In terms of assembly, homotetramer. Dimer of dimers. In the homotetramer, subunits assemble around a central channel that can accommodate two ligand molecules. Interacts with RBP4. In terms of processing, sulfonation of the reactive cysteine Cys-33 enhances the stability of the native conformation of TTR, avoiding misassembly of the protein leading to amyloid formation. As to expression, detected in plasma (at protein level). Expressed during metamorphosis in tadpole liver but not in tadpole brain, nor adult liver.

It is found in the secreted. Functionally, thyroid hormone-binding protein, with a much higher binding affinity for triiodothyronine (T3) than for thyroxine (T4). Probably transports triiodothyronine from the bloodstream to the brain. This chain is Transthyretin, found in Aquarana catesbeiana (American bullfrog).